The chain runs to 481 residues: Dual specificity protein kinase CLK4 (481 aa).

2 disordered regions span residues 1–46 and 102–143; these read MRHS…CKPH and SKSS…EDDE. Basic and acidic residues predominate over residues 8–24; it reads HCPDWDSRESWGHESYR. Composition is skewed to basic residues over residues 25–34 and 106–136; these read GSHKRKRRSH and VRSRRSSPKRKRNRHCSSHQSRSKSHRRKRS. Phosphoserine is present on residues serine 136 and serine 138. A Protein kinase domain is found at 159–475; that stretch reads YEIVDTLGEG…LDEALQHPFF (317 aa). ATP contacts are provided by residues 165-173 and lysine 189; that span reads LGEGAFGKV. Aspartate 286 functions as the Proton acceptor in the catalytic mechanism.

This sequence belongs to the protein kinase superfamily. CMGC Ser/Thr protein kinase family. Lammer subfamily. As to quaternary structure, interacts with UBL5. In terms of processing, autophosphorylates on all three types of residues. Expressed in liver, kidney, heart, muscle, brain and endothelial cells.

It is found in the nucleus. It carries out the reaction L-seryl-[protein] + ATP = O-phospho-L-seryl-[protein] + ADP + H(+). The catalysed reaction is L-threonyl-[protein] + ATP = O-phospho-L-threonyl-[protein] + ADP + H(+). It catalyses the reaction L-tyrosyl-[protein] + ATP = O-phospho-L-tyrosyl-[protein] + ADP + H(+). TG003 inhibits its kinase activity and affects the regulation of alternative splicing mediated by phosphorylation of SR proteins. Dual specificity kinase acting on both serine/threonine and tyrosine-containing substrates. Phosphorylates serine- and arginine-rich (SR) proteins of the spliceosomal complex and may be a constituent of a network of regulatory mechanisms that enable SR proteins to control RNA splicing. Phosphorylates SRSF1 and SRSF3. Required for the regulation of alternative splicing of MAPT/TAU. Regulates the alternative splicing of tissue factor (F3) pre-mRNA in endothelial cells. The chain is Dual specificity protein kinase CLK4 (CLK4) from Homo sapiens (Human).